Reading from the N-terminus, the 913-residue chain is ER degradation-enhancing alpha-mannosidase-like protein 3 (913 aa).

Residues 1 to 15 form the signal peptide; the sequence is MGCPAVEARRWGDMW. An N-linked (GlcNAc...) asparagine glycan is attached at asparagine 104. The active-site Proton donor is glutamate 132. Asparagine 181 carries an N-linked (GlcNAc...) asparagine glycan. Aspartate 279 is a catalytic residue. Residue glutamate 373 is the Proton donor of the active site. Glutamate 391 is an active-site residue. A Ca(2+)-binding site is contributed by threonine 477. An N-linked (GlcNAc...) asparagine glycan is attached at asparagine 497. Positions 660-766 constitute a PA domain; it reads LSKHLAGAQG…KEGNIILDAI (107 aa). N-linked (GlcNAc...) asparagine glycosylation is present at asparagine 797. Residues 823 to 895 form a disordered region; that stretch reads EESPVSQPEV…NKVQPMESIL (73 aa). Residues 826–839 are compositionally biased toward low complexity; sequence PVSQPEVPSSDSPS. Over residues 843 to 866 the composition is skewed to basic and acidic residues; sequence RTSERDITPESQEHKTEETEHSPK. The Prevents secretion from ER signature appears at 910-913; it reads KDEL.

It belongs to the glycosyl hydrolase 47 family. It depends on Ca(2+) as a cofactor.

The protein localises to the endoplasmic reticulum lumen. It carries out the reaction N(4)-(alpha-D-Man-(1-&gt;2)-alpha-D-Man-(1-&gt;2)-alpha-D-Man-(1-&gt;3)-[alpha-D-Man-(1-&gt;2)-alpha-D-Man-(1-&gt;3)-[alpha-D-Man-(1-&gt;2)-alpha-D-Man-(1-&gt;6)]-alpha-D-Man-(1-&gt;6)]-beta-D-Man-(1-&gt;4)-beta-D-GlcNAc-(1-&gt;4)-beta-D-GlcNAc)-L-asparaginyl-[protein] (N-glucan mannose isomer 9A1,2,3B1,2,3) + 4 H2O = N(4)-(alpha-D-Man-(1-&gt;3)-[alpha-D-Man-(1-&gt;3)-[alpha-D-Man-(1-&gt;6)]-alpha-D-Man-(1-&gt;6)]-beta-D-Man-(1-&gt;4)-beta-D-GlcNAc-(1-&gt;4)-beta-D-GlcNAc)-L-asparaginyl-[protein] (N-glucan mannose isomer 5A1,2) + 4 beta-D-mannose. The catalysed reaction is N(4)-(alpha-D-Man-(1-&gt;2)-alpha-D-Man-(1-&gt;2)-alpha-D-Man-(1-&gt;3)-[alpha-D-Man-(1-&gt;3)-[alpha-D-Man-(1-&gt;2)-alpha-D-Man-(1-&gt;6)]-alpha-D-Man-(1-&gt;6)]-beta-D-Man-(1-&gt;4)-beta-D-GlcNAc-(1-&gt;4)-beta-D-GlcNAc)-L-asparaginyl-[protein] (N-glucan mannose isomer 8A1,2,3B1,3) + 3 H2O = N(4)-(alpha-D-Man-(1-&gt;3)-[alpha-D-Man-(1-&gt;3)-[alpha-D-Man-(1-&gt;6)]-alpha-D-Man-(1-&gt;6)]-beta-D-Man-(1-&gt;4)-beta-D-GlcNAc-(1-&gt;4)-beta-D-GlcNAc)-L-asparaginyl-[protein] (N-glucan mannose isomer 5A1,2) + 3 beta-D-mannose. The protein operates within protein modification; protein glycosylation. Functionally, may be involved in endoplasmic reticulum-associated degradation (ERAD). The sequence is that of ER degradation-enhancing alpha-mannosidase-like protein 3 (edem3) from Xenopus laevis (African clawed frog).